A 160-amino-acid chain; its full sequence is Variant surface antigen C (160 aa).

A signal peptide spans Met1–Ser29. Residue Cys30 is the site of N-palmitoyl cysteine attachment. The S-diacylglycerol cysteine moiety is linked to residue Cys30. The tract at residues Gln32 to Thr160 is disordered. 2 stretches are compositionally biased toward low complexity: residues Ser38–Thr54 and Ser62–Thr87. Repeat copies occupy residues Glu86–Gln97, Glu98–Gln109, Glu110–Gln121, Glu122–Gln133, Glu134–Gln145, and Glu146–Gln157. Residues Glu86–Gln157 are 6 X 12 AA tandem repeats. Positions Glu93 to Thr160 are enriched in polar residues.

The protein resides in the cell membrane. Responsible for the antigenic diversity for host adaptation. This chain is Variant surface antigen C (vlpC), found in Mesomycoplasma hyorhinis (Mycoplasma hyorhinis).